We begin with the raw amino-acid sequence, 147 residues long: Large ribosomal subunit protein uL13 (147 aa).

Belongs to the universal ribosomal protein uL13 family. In terms of assembly, part of the 50S ribosomal subunit.

Functionally, this protein is one of the early assembly proteins of the 50S ribosomal subunit, although it is not seen to bind rRNA by itself. It is important during the early stages of 50S assembly. The chain is Large ribosomal subunit protein uL13 from Micrococcus luteus (strain ATCC 4698 / DSM 20030 / JCM 1464 / CCM 169 / CCUG 5858 / IAM 1056 / NBRC 3333 / NCIMB 9278 / NCTC 2665 / VKM Ac-2230) (Micrococcus lysodeikticus).